Consider the following 89-residue polypeptide: Cell division topological specificity factor (89 aa).

Belongs to the MinE family.

In terms of biological role, prevents the cell division inhibition by proteins MinC and MinD at internal division sites while permitting inhibition at polar sites. This ensures cell division at the proper site by restricting the formation of a division septum at the midpoint of the long axis of the cell. The chain is Cell division topological specificity factor from Pectobacterium atrosepticum (strain SCRI 1043 / ATCC BAA-672) (Erwinia carotovora subsp. atroseptica).